The sequence spans 138 residues: Cytochrome b5 (138 aa).

A Cytochrome b5 heme-binding domain is found at 14-90; the sequence is GRYYRLEEVQ…SETFIIGELH (77 aa). Positions 49 and 73 each coordinate heme. Residues 114-136 traverse the membrane as a helical segment; that stretch reads SWSNWVIPAIAAIIVALMYRSYM.

It belongs to the cytochrome b5 family.

The protein localises to the endoplasmic reticulum membrane. It localises to the microsome membrane. Cytochrome b5 is a membrane-bound hemoprotein functioning as an electron carrier for several membrane-bound oxygenases. This Gallus gallus (Chicken) protein is Cytochrome b5 (CYB5A).